We begin with the raw amino-acid sequence, 549 residues long: Probable serine/threonine-protein kinase WNK5 (549 aa).

The region spanning 25–283 (GRFREVLGKG…AKELLADPFL (259 aa)) is the Protein kinase domain. ATP is bound by residues 105 to 108 (TELF) and lysine 155. The Proton acceptor role is filled by aspartate 172. Positions 414–490 (ESFGHEDDED…SPAIDDDQNQ (77 aa)) are disordered. Acidic residues predominate over residues 452 to 463 (DDSSNDVIPDMD). Residues 467 to 476 (RSSNRLLNSS) are compositionally biased toward low complexity. Serine 504 bears the Phosphoserine mark. A disordered region spans residues 525–549 (RGRGFDPNTNELQPQPSSTDFIRRC). A compositionally biased stretch (polar residues) spans 531–549 (PNTNELQPQPSSTDFIRRC).

It belongs to the protein kinase superfamily. Ser/Thr protein kinase family. WNK subfamily. Interacts with AHK4.

It catalyses the reaction L-seryl-[protein] + ATP = O-phospho-L-seryl-[protein] + ADP + H(+). The catalysed reaction is L-threonyl-[protein] + ATP = O-phospho-L-threonyl-[protein] + ADP + H(+). Its function is as follows. Regulates flowering time by modulating the photoperiod pathway. In Arabidopsis thaliana (Mouse-ear cress), this protein is Probable serine/threonine-protein kinase WNK5 (WNK5).